The following is a 307-amino-acid chain: tRNA pseudouridine synthase B (307 aa).

Catalysis depends on Asp38, which acts as the Nucleophile.

It belongs to the pseudouridine synthase TruB family. Type 1 subfamily.

It carries out the reaction uridine(55) in tRNA = pseudouridine(55) in tRNA. In terms of biological role, responsible for synthesis of pseudouridine from uracil-55 in the psi GC loop of transfer RNAs. This is tRNA pseudouridine synthase B from Bacillus cereus (strain ATCC 14579 / DSM 31 / CCUG 7414 / JCM 2152 / NBRC 15305 / NCIMB 9373 / NCTC 2599 / NRRL B-3711).